Reading from the N-terminus, the 208-residue chain is Thymidylate kinase (208 aa).

Position 10–17 (10–17 (GPEGSGKT)) interacts with ATP.

It belongs to the thymidylate kinase family.

The catalysed reaction is dTMP + ATP = dTDP + ADP. Functionally, phosphorylation of dTMP to form dTDP in both de novo and salvage pathways of dTTP synthesis. The sequence is that of Thymidylate kinase from Bacillus cereus (strain AH187).